The chain runs to 153 residues: UPF0102 protein Pnap_0271 (153 aa).

The protein belongs to the UPF0102 family.

This Polaromonas naphthalenivorans (strain CJ2) protein is UPF0102 protein Pnap_0271.